Here is a 98-residue protein sequence, read N- to C-terminus: Integration host factor subunit beta (98 aa).

This sequence belongs to the bacterial histone-like protein family. As to quaternary structure, heterodimer of an alpha and a beta chain.

Functionally, this protein is one of the two subunits of integration host factor, a specific DNA-binding protein that functions in genetic recombination as well as in transcriptional and translational control. The chain is Integration host factor subunit beta from Gluconacetobacter diazotrophicus (strain ATCC 49037 / DSM 5601 / CCUG 37298 / CIP 103539 / LMG 7603 / PAl5).